The following is a 1009-amino-acid chain: DENN domain-containing protein 1A (1009 aa).

Positions 13 to 145 constitute a uDENN domain; sequence FEVYVEVAYP…HKLPIPDPGV (133 aa). One can recognise a cDENN domain in the interval 162-298; the sequence is ELPSIPENRN…VISSLKNRLK (137 aa). The 79-residue stretch at 300–378 folds into the dDENN domain; the sequence is VSTTTGDGVA…DGRLDLLNSG (79 aa). Residues 381 to 385 carry the FXDXF motif motif; it reads FSDVF. A disordered region spans residues 453–564; it reads DIAENGCAPT…TGPVPAPPDR (112 aa). Position 473 is a phosphoserine (Ser-473). Positions 477-489 are enriched in basic and acidic residues; that stretch reads EAKDPKLREDRRP. Residues 500–509 show a composition bias toward basic residues; the sequence is PRPHVVKRPK. At Thr-519 the chain carries Phosphothreonine. 5 positions are modified to phosphoserine: Ser-520, Ser-523, Ser-536, Ser-538, and Ser-546. Positions 569–578 match the Clathrin box motif; the sequence is DLLEDVFSNL. The residue at position 592 (Ser-592) is a Phosphoserine. Residues 648 to 714 are disordered; it reads IPSKPPAASP…RKTPELGIVP (67 aa). Ser-749 carries the post-translational modification Phosphoserine. Disordered regions lie at residues 796–831 and 928–1009; these read STLP…QPPL and RSSA…ETFE. 2 stretches are compositionally biased toward pro residues: residues 820-831 and 945-957; these read AGTPTPFPQPPL and GDPP…PPQG. The span at 972-983 shows a compositional bias: basic and acidic residues; the sequence is DPFEDLLQKTKQ. The segment covering 986–997 has biased composition (low complexity); the sequence is SPSPALAPAPDS. Positions 999-1009 are enriched in basic and acidic residues; that stretch reads EQLRKQWETFE.

In terms of assembly, interacts with RAB35. Interacts with clathrin and with the adapter protein complex 2, AP-2. Interacts with ITSN1 and SH3GL2. Interacts (when phosphorylated) with YWHAE. Post-translationally, phosphorylated on serine and/or threonine in an Akt-dependent manner. Phosphorylation probably regulates the guanine nucleotide exchange factor (GEF) activity, possibly by disrupting an intramolecular interaction between the DENN domain and the C-terminus of the protein, thereby relieving the autoinhibition.

It localises to the cytoplasmic vesicle. It is found in the clathrin-coated vesicle membrane. The protein localises to the presynaptic cell membrane. Its activity is regulated as follows. The guanine nucleotide exchange factor (GEF) activity is autoinhibited. Autoinhibition may be the result of intramolecular interaction between the DENN domain and the C-terminus, which is disrupted upon phosphorylation. Activation is regulated by Akt activation. Functionally, guanine nucleotide exchange factor (GEF) regulating clathrin-mediated endocytosis through RAB35 activation. Promotes the exchange of GDP to GTP, converting inactive GDP-bound RAB35 into its active GTP-bound form. Regulates clathrin-mediated endocytosis of synaptic vesicles and mediates exit from early endosomes. Binds phosphatidylinositol-phosphates (PtdInsPs), with some preference for PtdIns(3)P. The chain is DENN domain-containing protein 1A from Homo sapiens (Human).